We begin with the raw amino-acid sequence, 170 residues long: Small ribosomal subunit protein bS18c (170 aa).

Disordered stretches follow at residues 1–60 (MYTS…GPGD) and 149–170 (NRNLRNNNQNLRNNNRNLSSDC). 7 consecutive repeats follow at residues 4–10 (SKQPFLK), 11–17 (SKQPFSK), 18–24 (SEQPFSK), 25–31 (SEQPFRK), 32–38 (SKQTFRK), 39–45 (FKQPFRK), and 46–52 (SKQPFRR). Positions 4 to 52 (SKQPFLKSKQPFSKSEQPFSKSEQPFRKSKQTFRKFKQPFRKSKQPFRR) are 7 X 7 AA tandem repeats. Residues 13-26 (QPFSKSEQPFSKSE) show a composition bias toward polar residues. Positions 30-55 (RKSKQTFRKFKQPFRKSKQPFRRRPR) are enriched in basic residues.

This sequence belongs to the bacterial ribosomal protein bS18 family. As to quaternary structure, part of the 30S ribosomal subunit.

The protein localises to the plastid. It localises to the chloroplast. This Secale cereale (Rye) protein is Small ribosomal subunit protein bS18c (rps18).